The sequence spans 184 residues: Ribosome-recycling factor (184 aa).

It belongs to the RRF family.

It localises to the cytoplasm. Functionally, responsible for the release of ribosomes from messenger RNA at the termination of protein biosynthesis. May increase the efficiency of translation by recycling ribosomes from one round of translation to another. The polypeptide is Ribosome-recycling factor (Onion yellows phytoplasma (strain OY-M)).